A 692-amino-acid polypeptide reads, in one-letter code: Ribosome-releasing factor 2, mitochondrial (692 aa).

Residues 1-29 constitute a mitochondrion transit peptide; that stretch reads MLKYAWQSGPKQRNRWLWHLSNQIWKRSY. The tr-type G domain maps to 31-310; that stretch reads SKIRNIGILA…AVNAYLPAPE (280 aa). Residues 40 to 47, 104 to 108, and 158 to 161 contribute to the GTP site; these read AHIDAGKT, DTPGH, and NKMD.

This sequence belongs to the TRAFAC class translation factor GTPase superfamily. Classic translation factor GTPase family. EF-G/EF-2 subfamily.

It localises to the mitochondrion. In terms of biological role, mitochondrial GTPase that mediates the disassembly of ribosomes from messenger RNA at the termination of mitochondrial protein biosynthesis. Not involved in the GTP-dependent ribosomal translocation step during translation elongation. This is Ribosome-releasing factor 2, mitochondrial from Drosophila sechellia (Fruit fly).